A 625-amino-acid polypeptide reads, in one-letter code: Zinc finger protein 652-A (625 aa).

The tract at residues 80 to 255 (FFRDSKPINE…PSDKAKSEEK (176 aa)) is disordered. Residues 82–100 (RDSKPINEVHSVKGERENS) are compositionally biased toward basic and acidic residues. Residues 101–127 (GESEEEEDDDDDDDDEDDEEGEEDEDE) are compositionally biased toward acidic residues. Positions 150 to 166 (KGDKGVAQDSSHIKTSS) are enriched in basic and acidic residues. The segment covering 167-186 (DDEEGDSGEDDQDSHEDEEN) has biased composition (acidic residues). A compositionally biased stretch (basic and acidic residues) spans 240 to 255 (PKEPKSPSDKAKSEEK). The segment at 258 to 281 (LTCDKCPRVFNTRWYLEKHMNVTH) adopts a C2H2-type 1 zinc-finger fold. A C2H2-type 2; degenerate zinc finger spans residues 285–307 (QICDKCGKKFVLESELSLHLQTD). 6 consecutive C2H2-type zinc fingers follow at residues 312 to 335 (IQCI…KIVH), 342 to 364 (FSCE…LVAH), 370 to 392 (FTCE…SLQH), 398 to 420 (FRCE…MSIH), 426 to 448 (FMCQ…MKTH), and 454 to 476 (FICE…RRTH). Residues 482–505 (YPCDVCGMRFRFSNMLKAHKEKCF) form a C2H2-type 9; degenerate zinc finger.

It belongs to the krueppel C2H2-type zinc-finger protein family.

The protein resides in the nucleus. Its function is as follows. May be involved in transcriptional regulation. The polypeptide is Zinc finger protein 652-A (znf652-a) (Xenopus laevis (African clawed frog)).